We begin with the raw amino-acid sequence, 586 residues long: Arginine--tRNA ligase (586 aa).

A 'HIGH' region motif is present at residues A131–H141.

This sequence belongs to the class-I aminoacyl-tRNA synthetase family. Monomer.

It localises to the cytoplasm. The enzyme catalyses tRNA(Arg) + L-arginine + ATP = L-arginyl-tRNA(Arg) + AMP + diphosphate. In Azorhizobium caulinodans (strain ATCC 43989 / DSM 5975 / JCM 20966 / LMG 6465 / NBRC 14845 / NCIMB 13405 / ORS 571), this protein is Arginine--tRNA ligase.